The chain runs to 316 residues: Ribosomal RNA small subunit methyltransferase H (316 aa).

Residues A35–H37, D55, F84, D105, and Q112 contribute to the S-adenosyl-L-methionine site.

It belongs to the methyltransferase superfamily. RsmH family.

It localises to the cytoplasm. The enzyme catalyses cytidine(1402) in 16S rRNA + S-adenosyl-L-methionine = N(4)-methylcytidine(1402) in 16S rRNA + S-adenosyl-L-homocysteine + H(+). Functionally, specifically methylates the N4 position of cytidine in position 1402 (C1402) of 16S rRNA. The chain is Ribosomal RNA small subunit methyltransferase H from Streptococcus pneumoniae (strain JJA).